We begin with the raw amino-acid sequence, 466 residues long: Cell division protein FtsP (466 aa).

The segment at residues 1 to 28 (MNYSRRSLFKKTLIATALSALPATLLAA) is a signal peptide (tat-type signal).

It belongs to the FtsP family. Predicted to be exported by the Tat system. The position of the signal peptide cleavage has not been experimentally proven.

The protein localises to the periplasm. Cell division protein that is required for growth during stress conditions. May be involved in protecting or stabilizing the divisomal assembly under conditions of stress. The protein is Cell division protein FtsP of Actinobacillus succinogenes (strain ATCC 55618 / DSM 22257 / CCUG 43843 / 130Z).